Here is a 210-residue protein sequence, read N- to C-terminus: Dephospho-CoA kinase (210 aa).

One can recognise a DPCK domain in the interval 15-210 (VLGLTGGIGC…HKGYLKLALK (196 aa)). 23–28 (GCGKTA) provides a ligand contact to ATP.

It belongs to the CoaE family.

The protein resides in the cytoplasm. It carries out the reaction 3'-dephospho-CoA + ATP = ADP + CoA + H(+). It participates in cofactor biosynthesis; coenzyme A biosynthesis; CoA from (R)-pantothenate: step 5/5. In terms of biological role, catalyzes the phosphorylation of the 3'-hydroxyl group of dephosphocoenzyme A to form coenzyme A. In Pseudoalteromonas translucida (strain TAC 125), this protein is Dephospho-CoA kinase.